The following is a 153-amino-acid chain: Ribonuclease H (153 aa).

Positions 1–142 constitute an RNase H type-1 domain; sequence MLKTIKIFSD…CDHLARESAK (142 aa). Mg(2+)-binding residues include aspartate 10, glutamate 48, aspartate 70, and aspartate 134.

The protein belongs to the RNase H family. As to quaternary structure, monomer. Mg(2+) serves as cofactor.

The protein resides in the cytoplasm. It carries out the reaction Endonucleolytic cleavage to 5'-phosphomonoester.. Its function is as follows. Endonuclease that specifically degrades the RNA of RNA-DNA hybrids. In Buchnera aphidicola subsp. Baizongia pistaciae (strain Bp), this protein is Ribonuclease H.